We begin with the raw amino-acid sequence, 395 residues long: Subtilisin-like protease 9 (395 aa).

Positions 1 to 20 (MGFFRTLFSFSIFALSLADT) are cleaved as a signal peptide. Positions 21 to 120 (SKFIGLDDVD…ADRVVKMAAL (100 aa)) are excised as a propeptide. Positions 36–117 (SYIVVMKGAV…YVEADRVVKM (82 aa)) constitute an Inhibitor I9 domain. Residues 128–395 (SWGLGRISHK…RRLLYNGSGA (268 aa)) form the Peptidase S8 domain. Active-site charge relay system residues include aspartate 160 and histidine 191. The N-linked (GlcNAc...) asparagine glycan is linked to asparagine 252. Serine 341 functions as the Charge relay system in the catalytic mechanism. Asparagine 391 carries N-linked (GlcNAc...) asparagine glycosylation.

Belongs to the peptidase S8 family.

It is found in the secreted. In terms of biological role, secreted subtilisin-like serine protease with keratinolytic activity that contributes to pathogenicity. This Arthroderma otae (strain ATCC MYA-4605 / CBS 113480) (Microsporum canis) protein is Subtilisin-like protease 9 (SUB9).